Here is a 588-residue protein sequence, read N- to C-terminus: MKFPKNLFLVLFYTSWKFCDVCAYTPSHPLVYTKYGSVIGSVEYSRNSRAYMSFKGIPFAKPPVGDLRFKAPEPPEPWNFSINGTKDAPFCIQKNYFFSNPKVEGSEDCLYLNVYVPKTEGSQLLPVMVFIHWGGFFAGRGSSDYIGPEYIMDKDVILVTFNYRLGVFGFLSTLDDNAPGNFGLKDQVMALKFVHENIECFGGDNNRVTIFGQSAGSGSVNLHLISPASRGLFQQAISQSGAALDLWARPLNALQPNVTAALAAFTGCSAHIGSSKDIVDCLRKIEATKLAETADNFKYFSIEPLTPYSMVTEKQTDANPNPFLVQDPLESLKAGAFMKIPWMVGSVQDEGILRAAPLIRQPETLQTLNSNFEKLITQMLFLQFSAGANASSLLKNMTDFYLGGKSLIDVNNPKSVQGFINLYGDRAFHYGIYQTVILQLRKGHKPIWMYNFNYKGQYSYGDKFAATDKNVNFTWGVSHCDDLLYLFKSPGLFANLQKDNDILMSKTMVSFWTNFAIYGNPDPHQNLNWNSLNFEKPEGVKVADLNIMHITGNHETGKIAFDVEKSQILDRIAFWAKQSLLENFPDFG.

The signal sequence occupies residues 1–23 (MKFPKNLFLVLFYTSWKFCDVCA). 2 N-linked (GlcNAc...) asparagine glycosylation sites follow: Asn79 and Asn83. Cys91 and Cys109 are disulfide-bonded. Catalysis depends on Ser214, which acts as the Acyl-ester intermediate. A glycan (N-linked (GlcNAc...) asparagine) is linked at Asn257. A disulfide bond links Cys268 and Cys281. Glu350 (charge relay system) is an active-site residue. Residues Asn389, Asn396, and Asn472 are each glycosylated (N-linked (GlcNAc...) asparagine). The active-site Charge relay system is the His479.

The protein belongs to the type-B carboxylesterase/lipase family.

It is found in the secreted. It carries out the reaction juvenile hormone III + H2O = juvenile hormone III carboxylate + methanol + H(+). Its activity is regulated as follows. Inhibited by 3-octylthio-1,1,1-trifluoro-2-propanone (OTFP), a specific inhibitor of juvenile hormone esterase (JHE), but not by diisopropyl fluorophosphate (DFP), a serine enzyme inhibitor. In terms of biological role, may function as a juvenile hormone (JH)-specific degradation enzyme in vivo decreasing JH activity. Hydrolyzes JH III in vitro. Hydrolyzes effectively also methyl hepthylthioacetothioate (HEPTAT), a synthetic substrate. Of the general esterase substrates, it has preference for 2-naphthyl acetate (2-NA) and shows a weak activity for 1-NA and 4-nitrophenylacetate (4-NPA). This Tribolium castaneum (Red flour beetle) protein is Juvenile hormone esterase.